A 211-amino-acid chain; its full sequence is Protein Nef (211 aa).

Residues 1–38 (MGNAWSKSKFAGWSEVRDRMRRSSSDPQQPCAPGVGAV) are disordered. A lipid anchor (N-myristoyl glycine; by host) is attached at glycine 2. Serine 6 carries the phosphoserine; by host modification. The segment covering 15-24 (EVRDRMRRSS) has biased composition (basic and acidic residues). The acidic; interacts with host PACS1 and PACS2; stabilizes the interaction of NEF/MHC-I with host AP1M1; necessary for MHC-I internalization stretch occupies residues 67 to 70 (KDED). The segment at 74–83 (PVRPQVPLRP) is SH3-binding; interaction with Src family tyrosine kinases. Residues 77-80 (PQVP) carry the PxxP; stabilizes the interaction of NEF/MHC-I with host AP1M1; necessary for MHC-I internalization motif. Residues 113 to 129 (EILDLWIYHTQGFFPDW) form a mediates dimerization, Nef-PTE1 interaction region. The segment at 153 to 186 (VSAEEAERLGNTNEDASLLHPACNHGAEDAHGEI) is binding to ATP6V1H. Positions 170–171 (LL) match the Dileucine internalization motif; necessary for CD4 internalization motif. Positions 180–181 (ED) match the Diacidic; necessary for CD4 internalization motif.

Belongs to the lentivirus primate group Nef protein family. In terms of assembly, monomer; cytosolic form. Homodimer; membrane bound form. Interacts with Nef associated p21-activated kinase (PAK2); this interaction activates PAK2. Associates with the Nef-MHC-I-AP1 complex; this complex is required for MHC-I internalization. Interacts (via C-terminus) with host PI3-kinase. Interacts with host PACS1; this interaction seems to be weak. Interacts with host PACS2. Interacts with host LCK and MAPK3; these interactions inhibit the kinase activity of the latter. Interacts with host ATP6V1H; this interaction may play a role in CD4 endocytosis. Associates with the CD4-Nef-AP2 complex; this complex is required for CD4 internalization. Interacts with host AP2 subunit alpha and AP2 subunit sigma2. Interacts with TCR-zeta chain; this interaction up-regulates the Fas ligand (FasL) surface expression. Interacts with host HCK, LYN, and SRC; these interactions activate the Src family kinases. Interacts with MAP3K5; this interaction inhibits the Fas and TNFR-mediated death signals. Interacts with beta-COP and PTE1. Interacts with human RACK1; this increases Nef phosphorylation by PKC. Interacts with TP53; this interaction decreases the half-life of TP53, protecting the infected cell against p53-mediated apoptosis. The virion-associated Nef proteins are cleaved by the viral protease to release the soluble C-terminal core protein. Nef is probably cleaved concomitantly with viral structural proteins on maturation of virus particles. Post-translationally, myristoylated. In terms of processing, phosphorylated on serine residues, probably by host PKCdelta and theta.

It localises to the host cell membrane. It is found in the virion. The protein localises to the secreted. Its subcellular location is the host Golgi apparatus membrane. Factor of infectivity and pathogenicity, required for optimal virus replication. Alters numerous pathways of T-lymphocyte function and down-regulates immunity surface molecules in order to evade host defense and increase viral infectivity. Alters the functionality of other immunity cells, like dendritic cells, monocytes/macrophages and NK cells. Its function is as follows. In infected CD4(+) T-lymphocytes, down-regulates the surface MHC-I, mature MHC-II, CD4, CD28, CCR5 and CXCR4 molecules. Mediates internalization and degradation of host CD4 through the interaction of with the cytoplasmic tail of CD4, the recruitment of AP-2 (clathrin adapter protein complex 2), internalization through clathrin coated pits, and subsequent transport to endosomes and lysosomes for degradation. Diverts host MHC-I molecules to the trans-Golgi network-associated endosomal compartments by an endocytic pathway to finally target them for degradation. MHC-I down-regulation may involve AP-1 (clathrin adapter protein complex 1) or possibly Src family kinase-ZAP70/Syk-PI3K cascade recruited by PACS2. In consequence infected cells are masked for immune recognition by cytotoxic T-lymphocytes. Decreasing the number of immune receptors also prevents reinfection by more HIV particles (superinfection). Down-regulates host SERINC3 and SERINC5 thereby excluding these proteins from the viral particles. Virion infectivity is drastically higher when SERINC3 or SERINC5 are excluded from the viral envelope, because these host antiviral proteins impair the membrane fusion event necessary for subsequent virion penetration. Functionally, bypasses host T-cell signaling by inducing a transcriptional program nearly identical to that of anti-CD3 cell activation. Interaction with TCR-zeta chain up-regulates the Fas ligand (FasL). Increasing surface FasL molecules and decreasing surface MHC-I molecules on infected CD4(+) cells send attacking cytotoxic CD8+ T-lymphocytes into apoptosis. In terms of biological role, plays a role in optimizing the host cell environment for viral replication without causing cell death by apoptosis. Protects the infected cells from apoptosis in order to keep them alive until the next virus generation is ready to strike. Inhibits the Fas and TNFR-mediated death signals by blocking MAP3K5/ASK1. Decreases the half-life of TP53, protecting the infected cell against p53-mediated apoptosis. Inhibits the apoptotic signals regulated by the Bcl-2 family proteins through the formation of a Nef/PI3-kinase/PAK2 complex that leads to activation of PAK2 and induces phosphorylation of host BAD. Extracellular Nef protein targets CD4(+) T-lymphocytes for apoptosis by interacting with CXCR4 surface receptors. In Human immunodeficiency virus type 1 group O (isolate MVP5180) (HIV-1), this protein is Protein Nef.